Reading from the N-terminus, the 242-residue chain is Cytochrome c oxidase subunit 2 (242 aa).

Over 7 to 33 (DVPVPYGLYFQDSATPTFDGIIELHDI) the chain is Mitochondrial intermembrane. Residues 34-55 (VMFYIVVTIVLVSYLLFVIIKN) form a helical membrane-spanning segment. The Mitochondrial matrix segment spans residues 56 to 73 (FSNDHISYKYLTHGTTLE). A helical membrane pass occupies residues 74–98 (IVWTIFPVVILLFIAFPSFILLYLC). The Mitochondrial intermembrane portion of the chain corresponds to 99–242 (DEVIDPAMTI…DKFLSWLDEQ (144 aa)). Residues histidine 177, cysteine 212, glutamate 214, cysteine 216, histidine 220, and methionine 223 each contribute to the Cu cation site. Residue glutamate 214 participates in Mg(2+) binding.

Belongs to the cytochrome c oxidase subunit 2 family. In terms of assembly, component of the cytochrome c oxidase (complex IV, CIV), a multisubunit enzyme composed of a catalytic core of 3 subunits and several supernumerary subunits. The complex exists as a monomer or a dimer and forms supercomplexes (SCs) in the inner mitochondrial membrane with ubiquinol-cytochrome c oxidoreductase (cytochrome b-c1 complex, complex III, CIII). The cofactor is Cu cation. In terms of processing, the signal sequence of COX2 is processed by IMP1.

The protein localises to the mitochondrion inner membrane. The enzyme catalyses 4 Fe(II)-[cytochrome c] + O2 + 8 H(+)(in) = 4 Fe(III)-[cytochrome c] + 2 H2O + 4 H(+)(out). In terms of biological role, component of the cytochrome c oxidase, the last enzyme in the mitochondrial electron transport chain which drives oxidative phosphorylation. The respiratory chain contains 3 multisubunit complexes succinate dehydrogenase (complex II, CII), ubiquinol-cytochrome c oxidoreductase (cytochrome b-c1 complex, complex III, CIII) and cytochrome c oxidase (complex IV, CIV), that cooperate to transfer electrons derived from NADH and succinate to molecular oxygen, creating an electrochemical gradient over the inner membrane that drives transmembrane transport and the ATP synthase. Cytochrome c oxidase is the component of the respiratory chain that catalyzes the reduction of oxygen to water. Electrons originating from reduced cytochrome c in the intermembrane space (IMS) are transferred via the dinuclear copper A center (CU(A)) of subunit 2 and heme A of subunit 1 to the active site in subunit 1, a binuclear center (BNC) formed by heme A3 and copper B (CU(B)). The BNC reduces molecular oxygen to 2 water molecules using 4 electrons from cytochrome c in the IMS and 4 protons from the mitochondrial matrix. The chain is Cytochrome c oxidase subunit 2 (COX2) from Yarrowia lipolytica (strain CLIB 122 / E 150) (Yeast).